Consider the following 134-residue polypeptide: Small ribosomal subunit protein uS12 (134 aa).

Residue Asp89 is modified to 3-methylthioaspartic acid. The segment at Lys109–Lys134 is disordered. Over residues Asn111–Lys123 the composition is skewed to basic residues. Residues Ala124 to Lys134 show a composition bias toward low complexity.

The protein belongs to the universal ribosomal protein uS12 family. As to quaternary structure, part of the 30S ribosomal subunit. Contacts proteins S8 and S17. May interact with IF1 in the 30S initiation complex.

Its function is as follows. With S4 and S5 plays an important role in translational accuracy. Functionally, interacts with and stabilizes bases of the 16S rRNA that are involved in tRNA selection in the A site and with the mRNA backbone. Located at the interface of the 30S and 50S subunits, it traverses the body of the 30S subunit contacting proteins on the other side and probably holding the rRNA structure together. The combined cluster of proteins S8, S12 and S17 appears to hold together the shoulder and platform of the 30S subunit. The chain is Small ribosomal subunit protein uS12 from Wolinella succinogenes (strain ATCC 29543 / DSM 1740 / CCUG 13145 / JCM 31913 / LMG 7466 / NCTC 11488 / FDC 602W) (Vibrio succinogenes).